Here is a 1344-residue protein sequence, read N- to C-terminus: Protein stu1 (1344 aa).

An HEAT 1 repeat occupies 93–131 (LYPLLVERLGDHKERIRAQAAQSFTDMWLAAPEEVEQCV). The disordered stretch occupies residues 265–292 (HRPVSRAETQASRSVSRLDTHQRPASRM). Residues 508 to 544 (VTFTTRILQHVSGACQDKNVQLRLFAAGWLKTLIQKQ) form an HEAT 2 repeat. Disordered stretches follow at residues 606–637 (RSLL…ANGT), 651–847 (AAQK…STPR), 914–945 (LTEN…ESVP), 984–1004 (PVTH…LSSS), and 1031–1054 (SLPH…PSQR). 2 stretches are compositionally biased toward polar residues: residues 691–705 (VRTV…SLSS) and 735–747 (ATDS…NQID). Residues 748 to 769 (GSPSAAKSKSSTPSLKSVSSTG) show a composition bias toward low complexity. Composition is skewed to polar residues over residues 828–847 (FSVT…STPR) and 914–942 (LTEN…NQDE). Low complexity predominate over residues 995–1004 (SSKPSGLSSS).

This sequence belongs to the CLASP family. Interacts with microtubules.

It localises to the cytoplasm. The protein resides in the cytoskeleton. It is found in the nucleus. Its subcellular location is the spindle. Functionally, microtubule binding protein that promotes the stabilization of dynamic microtubules. Required for mitotic spindle formation. The polypeptide is Protein stu1 (stu1) (Aspergillus fumigatus (strain ATCC MYA-4609 / CBS 101355 / FGSC A1100 / Af293) (Neosartorya fumigata)).